The primary structure comprises 208 residues: Outer-membrane lipoprotein carrier protein (208 aa).

The N-terminal stretch at 1 to 21 (MPAFRYLIVLPLLCWGFASQA) is a signal peptide.

This sequence belongs to the LolA family. In terms of assembly, monomer.

The protein resides in the periplasm. Functionally, participates in the translocation of lipoproteins from the inner membrane to the outer membrane. Only forms a complex with a lipoprotein if the residue after the N-terminal Cys is not an aspartate (The Asp acts as a targeting signal to indicate that the lipoprotein should stay in the inner membrane). The protein is Outer-membrane lipoprotein carrier protein of Methylococcus capsulatus (strain ATCC 33009 / NCIMB 11132 / Bath).